Here is a 203-residue protein sequence, read N- to C-terminus: Synaptosomal-associated protein 25-B (203 aa).

The segment covering 1 to 11 has biased composition (basic and acidic residues); sequence MADEADMRNEL. The interval 1–25 is disordered; sequence MADEADMRNELTDMQARADQLGDES. T-SNARE coiled-coil homology domains follow at residues 19–81 and 137–199; these read DQLG…LTDL and DARE…ATKM.

This sequence belongs to the SNAP-25 family.

It localises to the synapse. The protein localises to the synaptosome. The protein resides in the cell membrane. May play an important role in the synaptic function of specific neuronal systems. Associates with proteins involved in vesicle docking and membrane fusion. The polypeptide is Synaptosomal-associated protein 25-B (snap25b) (Carassius auratus (Goldfish)).